We begin with the raw amino-acid sequence, 339 residues long: Very-long-chain 3-oxoacyl-CoA reductase (339 aa).

A helical membrane pass occupies residues 19–39 (VALFLLSIGGLFTACKLFSFC). Positions 64, 105, 119, 127, 146, 213, 217, 246, and 248 each coordinate NADP(+). Residue Y213 is the Proton donor of the active site. The Lowers pKa of active site Tyr role is filled by K217.

This sequence belongs to the short-chain dehydrogenases/reductases (SDR) family.

The protein resides in the endoplasmic reticulum membrane. It catalyses the reaction a very-long-chain (3R)-3-hydroxyacyl-CoA + NADP(+) = a very-long-chain 3-oxoacyl-CoA + NADPH + H(+). It functions in the pathway lipid metabolism; fatty acid biosynthesis. Its function is as follows. Component of the microsomal membrane bound fatty acid elongation system, which produces the 26-carbon very long-chain fatty acids (VLCFA) from palmitate. Catalyzes the reduction of the 3-ketoacyl-CoA intermediate that is formed in each cycle of fatty acid elongation. VLCFAs serve as precursors for ceramide and sphingolipids. The sequence is that of Very-long-chain 3-oxoacyl-CoA reductase from Ajellomyces capsulatus (strain NAm1 / WU24) (Darling's disease fungus).